The sequence spans 410 residues: Chaperone protein dnaJ 15 (410 aa).

The J domain occupies 17-82; sequence DPYEVLCVSK…EKRRHYDNAG (66 aa). Positions 284-344 form a coiled coil; the sequence is AKTYEDTTEK…TVDELLKQRD (61 aa). Residues 351 to 410 form a disordered region; that stretch reads SVVKTPSGNNLSNGSSSKAQGDESKGDGDSAGEEGGTENRDKSKRKWFNLNLKGSDKKLG. Residues 357–367 are compositionally biased toward low complexity; that stretch reads SGNNLSNGSSS.

It belongs to the DnaJ family. B/II subfamily. In terms of tissue distribution, expressed at high levels in root cap, root tip meristematic region and elongation zones, and at lower levels in mature part of roots (at protein level). Constitutively expressed in seedlings, etiolated or not, roots, rosette leaves, cauline leaves, stems, flowers, siliques and pollen.

Its subcellular location is the cytoplasm. It is found in the cytoskeleton. It localises to the endoplasmic reticulum membrane. The protein localises to the golgi apparatus membrane. Plays a continuous role in plant development probably in the structural organization of compartments. Seems to be involved in early gravitropic signal transduction within the gravity-perceiving cells (statocytes), where it influences pH changes and auxin distribution. Probably affects the localization and/or activity of auxin efflux carrier components (PIN proteins) or other proteins involved in lateral auxin transport. This Arabidopsis thaliana (Mouse-ear cress) protein is Chaperone protein dnaJ 15 (ATJ15).